Reading from the N-terminus, the 412-residue chain is L-threonine:uridine-5'-aldehyde transaldolase (412 aa).

Lysine 229 carries the N6-(pyridoxal phosphate)lysine modification.

Belongs to the SHMT family. Pyridoxal 5'-phosphate serves as cofactor.

The enzyme catalyses uridine-5'-aldehyde + L-threonine = (5'S,6'S)-C-glycyluridine + acetaldehyde. It participates in antibiotic biosynthesis. Its function is as follows. Transaldolase involved in the biosynthesis of the capuramycin-type nucleoside antibiotic A-102395. Catalyzes the condensation of L-threonine and uridine-5'-aldehyde to form 5'-C-glycyluridine (GlyU). This is L-threonine:uridine-5'-aldehyde transaldolase from Amycolatopsis sp.